Here is a 171-residue protein sequence, read N- to C-terminus: UPF0398 protein STER_0279 (171 aa).

This sequence belongs to the UPF0398 family.

This chain is UPF0398 protein STER_0279, found in Streptococcus thermophilus (strain ATCC BAA-491 / LMD-9).